The primary structure comprises 53 residues: uncharacterized protein (53 aa).

The protein localises to the mitochondrion. This is an uncharacterized protein from Saccharomyces cerevisiae (strain ATCC 204508 / S288c) (Baker's yeast).